A 217-amino-acid polypeptide reads, in one-letter code: Thymidylate kinase (217 aa).

16-23 (GIDGAGKT) serves as a coordination point for ATP.

Belongs to the thymidylate kinase family.

The enzyme catalyses dTMP + ATP = dTDP + ADP. Its function is as follows. Phosphorylation of dTMP to form dTDP in both de novo and salvage pathways of dTTP synthesis. The sequence is that of Thymidylate kinase from Xylella fastidiosa (strain M12).